The following is a 463-amino-acid chain: Arginine biosynthesis bifunctional protein ArgJ, chloroplastic (463 aa).

Residues Thr-207, Lys-233, Thr-244, Glu-331, Asn-458, and Thr-463 each contribute to the substrate site. The active-site Nucleophile is Thr-244.

This sequence belongs to the ArgJ family. In terms of assembly, heterodimer of an alpha and a beta chain.

The protein resides in the plastid. Its subcellular location is the chloroplast. It catalyses the reaction N(2)-acetyl-L-ornithine + L-glutamate = N-acetyl-L-glutamate + L-ornithine. The enzyme catalyses L-glutamate + acetyl-CoA = N-acetyl-L-glutamate + CoA + H(+). The protein operates within amino-acid biosynthesis; L-arginine biosynthesis; L-ornithine and N-acetyl-L-glutamate from L-glutamate and N(2)-acetyl-L-ornithine (cyclic): step 1/1. Its pathway is amino-acid biosynthesis; L-arginine biosynthesis; N(2)-acetyl-L-ornithine from L-glutamate: step 1/4. Its function is as follows. Catalyzes two activities which are involved in the cyclic version of arginine biosynthesis: the synthesis of acetylglutamate from glutamate and acetyl-CoA, and of ornithine by transacetylation between acetylornithine and glutamate. This chain is Arginine biosynthesis bifunctional protein ArgJ, chloroplastic, found in Oryza sativa subsp. japonica (Rice).